A 98-amino-acid chain; its full sequence is High mobility group nucleosome-binding domain-containing protein 3 (98 aa).

Composition is skewed to basic and acidic residues over residues 1–25 (MPKR…EPTR), 39–52 (PEPK…KEPG), 61–71 (GKKDEKQEAAK), and 80–98 (GENK…DKNE). The interval 1–98 (MPKRKSPEGA…KTESVGDKNE (98 aa)) is disordered.

This sequence belongs to the HMGN family.

It localises to the nucleus. This Gallus gallus (Chicken) protein is High mobility group nucleosome-binding domain-containing protein 3 (HMGN3).